The chain runs to 321 residues: Phosphate-import protein PhnD (321 aa).

The N-terminal stretch at 1 to 22 is a signal peptide; the sequence is MKIRAHHKIATAAACVALLASA. Cys23 is lipidated: N-palmitoyl cysteine. Cys23 carries the S-diacylglycerol cysteine lipid modification.

The protein belongs to the phosphate/phosphite/phosphonate binding protein family. In terms of assembly, the complex is composed of two ATP-binding proteins (PhnC), two transmembrane proteins (PhnE) and a solute-binding protein (PhnD).

The protein localises to the cell membrane. In terms of biological role, part of the ABC transporter complex PhnCDE involved in phosphate import. Responsible for phosphate binding. The sequence is that of Phosphate-import protein PhnD (phnD) from Mycolicibacterium smegmatis (strain ATCC 700084 / mc(2)155) (Mycobacterium smegmatis).